Reading from the N-terminus, the 643-residue chain is Threonine--tRNA ligase (643 aa).

Positions 1 to 61 (MIKITLKDGS…NEDSSLEICT (61 aa)) constitute a TGS domain. The catalytic stretch occupies residues 240-540 (DHNKLGRELG…LIEKYAGALP (301 aa)). 3 residues coordinate Zn(2+): Cys335, His386, and His517.

It belongs to the class-II aminoacyl-tRNA synthetase family. As to quaternary structure, homodimer. Requires Zn(2+) as cofactor.

The protein resides in the cytoplasm. It carries out the reaction tRNA(Thr) + L-threonine + ATP = L-threonyl-tRNA(Thr) + AMP + diphosphate + H(+). Functionally, catalyzes the attachment of threonine to tRNA(Thr) in a two-step reaction: L-threonine is first activated by ATP to form Thr-AMP and then transferred to the acceptor end of tRNA(Thr). Also edits incorrectly charged L-seryl-tRNA(Thr). In Clostridium perfringens (strain SM101 / Type A), this protein is Threonine--tRNA ligase.